The sequence spans 303 residues: Bifunctional protein FolD 2 (303 aa).

Residues 169 to 171 (GRS), Ser194, and Ile235 each bind NADP(+).

It belongs to the tetrahydrofolate dehydrogenase/cyclohydrolase family. Homodimer.

The enzyme catalyses (6R)-5,10-methylene-5,6,7,8-tetrahydrofolate + NADP(+) = (6R)-5,10-methenyltetrahydrofolate + NADPH. It catalyses the reaction (6R)-5,10-methenyltetrahydrofolate + H2O = (6R)-10-formyltetrahydrofolate + H(+). It functions in the pathway one-carbon metabolism; tetrahydrofolate interconversion. In terms of biological role, catalyzes the oxidation of 5,10-methylenetetrahydrofolate to 5,10-methenyltetrahydrofolate and then the hydrolysis of 5,10-methenyltetrahydrofolate to 10-formyltetrahydrofolate. The polypeptide is Bifunctional protein FolD 2 (Ectopseudomonas mendocina (strain ymp) (Pseudomonas mendocina)).